Here is a 799-residue protein sequence, read N- to C-terminus: Mitochondrial intermediate peptidase (799 aa).

A Zn(2+)-binding site is contributed by H562. E563 is a catalytic residue. The Zn(2+) site is built by H566 and H569.

The protein belongs to the peptidase M3 family. It depends on Zn(2+) as a cofactor.

Its subcellular location is the mitochondrion matrix. The enzyme catalyses Release of an N-terminal octapeptide as second stage of processing of some proteins imported into the mitochondrion.. Functionally, cleaves proteins, imported into the mitochondrion, to their mature size. While most mitochondrial precursor proteins are processed to the mature form in one step by mitochondrial processing peptidase (MPP), the sequential cleavage by MIP of an octapeptide after initial processing by MPP is a required step for a subgroup of nuclear-encoded precursor proteins destined for the matrix or the inner membrane. The chain is Mitochondrial intermediate peptidase (oct1) from Aspergillus niger (strain ATCC MYA-4892 / CBS 513.88 / FGSC A1513).